A 29-amino-acid polypeptide reads, in one-letter code: GKYTCGETCFKGKCYTPGCTCSYPICKKD.

A cross-link (cyclopeptide (Gly-Asp)) is located at residues 1–29; that stretch reads GKYTCGETCFKGKCYTPGCTCSYPICKKD. Cystine bridges form between Cys-5-Cys-19, Cys-9-Cys-21, and Cys-14-Cys-26.

In terms of processing, this is a cyclic peptide. Contains 3 disulfide bonds.

Its function is as follows. Probably participates in a plant defense mechanism (Potential). Binds to and induces leakage in phospholipd membranes, particularly ones containing 1-palmitoyl-2-oleophosphatidylethanolamine (POPE). In vitro, displays cytotoxicity against cultured cells but no hemolytic activity towards fresh erythrocytes. Not active against Gram-negative bacterium E.coli ATCC 25922 or Gram-positive bacterium S.aureus ATCC 25923 up to a concentration of 64 uM. The polypeptide is Cyclotide mela-1 (Melicytus latifolius (Norfolk Island mahoe)).